The sequence spans 216 residues: Probable nicotinate-nucleotide adenylyltransferase (216 aa).

The protein belongs to the NadD family.

The enzyme catalyses nicotinate beta-D-ribonucleotide + ATP + H(+) = deamido-NAD(+) + diphosphate. The protein operates within cofactor biosynthesis; NAD(+) biosynthesis; deamido-NAD(+) from nicotinate D-ribonucleotide: step 1/1. Functionally, catalyzes the reversible adenylation of nicotinate mononucleotide (NaMN) to nicotinic acid adenine dinucleotide (NaAD). In Buchnera aphidicola subsp. Schizaphis graminum (strain Sg), this protein is Probable nicotinate-nucleotide adenylyltransferase.